Consider the following 70-residue polypeptide: DNA gyrase inhibitor YacG (70 aa).

Zn(2+) is bound by residues C9, C12, C28, and C32. Positions 43–70 are disordered; it reads ESRKIPGSSIDPESIVTTNNKQDNVDEQ.

This sequence belongs to the DNA gyrase inhibitor YacG family. In terms of assembly, interacts with GyrB. It depends on Zn(2+) as a cofactor.

In terms of biological role, inhibits all the catalytic activities of DNA gyrase by preventing its interaction with DNA. Acts by binding directly to the C-terminal domain of GyrB, which probably disrupts DNA binding by the gyrase. The chain is DNA gyrase inhibitor YacG from Legionella pneumophila (strain Corby).